We begin with the raw amino-acid sequence, 472 residues long: Protein translocase subunit SecD (472 aa).

6 helical membrane-spanning segments follow: residues 7–27 (LLLL…KLPL), 298–318 (LVAG…YYRL), 326–345 (SLMI…GVTL), 349–368 (GIAG…VLIF), 392–414 (AFSS…FWFG), and 432–452 (SLFT…LSLP).

This sequence belongs to the SecD/SecF family. SecD subfamily. As to quaternary structure, forms a complex with SecF. Part of the essential Sec protein translocation apparatus which comprises SecA, SecYEG and auxiliary proteins SecDF. Other proteins may also be involved.

The protein localises to the cell inner membrane. In terms of biological role, part of the Sec protein translocase complex. Interacts with the SecYEG preprotein conducting channel. SecDF uses the proton motive force (PMF) to complete protein translocation after the ATP-dependent function of SecA. Functionally, probably participates in protein translocation into and across both the cytoplasmic and thylakoid membranes in cyanobacterial cells. This chain is Protein translocase subunit SecD, found in Synechocystis sp. (strain ATCC 27184 / PCC 6803 / Kazusa).